Consider the following 537-residue polypeptide: Nedd4 binding protein 3 (537 aa).

Ser-172 is modified (phosphoserine). Disordered regions lie at residues 173 to 234 (LDEG…VLSC), 327 to 359 (RKEL…EEEA), and 422 to 456 (LQEQ…EARE). Residues 178–207 (PEPSLSDSSSGGSFGRSPGTGPSPFSSSLG) show a composition bias toward low complexity. Positions 295–523 (VDRLHEVAQK…LEQELRVLRE (229 aa)) form a coiled coil.

It belongs to the N4BP3 family. As to quaternary structure, binds NEDD4. Interacts with 14-3-3 proteins. Interacts with MAVS.

The protein localises to the cytoplasmic vesicle. Its subcellular location is the cell projection. The protein resides in the axon. It localises to the dendrite. Plays a positive role in the antiviral innate immune signaling pathway. Mechanistically, interacts with MAVS and functions as a positive regulator to promote 'Lys-63'-linked polyubiquitination of MAVS and thus strengthens the interaction between MAVS and TRAF2. Also plays a role in axon and dendrite arborization during cranial nerve development. May also be important for neural crest migration and early development of other anterior structures including eye, brain and cranial cartilage. The chain is Nedd4 binding protein 3 from Rattus norvegicus (Rat).